The following is a 211-amino-acid chain: Mediator-associated protein 2 (211 aa).

Residues 128 to 211 (QQKLVGSVTN…KSKKKVKKEE (84 aa)) form a disordered region. A compositionally biased stretch (low complexity) spans 134–148 (SVTNSSKKSSNLTQS). Position 173 is a phosphoserine (Ser-173). Residues 189–198 (STSTVSGSSE) show a composition bias toward low complexity. Basic residues predominate over residues 202–211 (KSKKKVKKEE).

In terms of assembly, associated with the Mediator complex.

It localises to the nucleus. In Arabidopsis thaliana (Mouse-ear cress), this protein is Mediator-associated protein 2.